The following is a 208-amino-acid chain: Protein-L-isoaspartate O-methyltransferase (208 aa).

Ser-59 is an active-site residue.

It belongs to the methyltransferase superfamily. L-isoaspartyl/D-aspartyl protein methyltransferase family.

The protein localises to the cytoplasm. The enzyme catalyses [protein]-L-isoaspartate + S-adenosyl-L-methionine = [protein]-L-isoaspartate alpha-methyl ester + S-adenosyl-L-homocysteine. Functionally, catalyzes the methyl esterification of L-isoaspartyl residues in peptides and proteins that result from spontaneous decomposition of normal L-aspartyl and L-asparaginyl residues. It plays a role in the repair and/or degradation of damaged proteins. This is Protein-L-isoaspartate O-methyltransferase from Proteus mirabilis (strain HI4320).